Here is a 384-residue protein sequence, read N- to C-terminus: Glucans biosynthesis protein C (384 aa).

A run of 10 helical transmembrane segments spans residues 17 to 37, 54 to 74, 91 to 111, 140 to 160, 173 to 193, 212 to 232, 240 to 260, 274 to 294, 311 to 331, and 338 to 358; these read AWLMLLGIPFHISLIYSTHSW, FIHAFRMQVFFVISGYFSYML, VGIPMLTAIPLLTLPQFILLQ, LWFLLVLVILTTVSIGIFTWF, AISLAKLSLIFFLLGVAYAAI, FIVMQTLFYVPFFILGALAFI, FTTPSRGCTLGAAVAFIAYLL, TESVITMVMGLWMVNVVFSLG, ASLFIYLVHHPLTLFFGAYIT, and LIGFLCGLIFVMGIALILYEI.

This sequence belongs to the acyltransferase 3 family. OpgC subfamily.

It is found in the cell membrane. It participates in glycan metabolism; osmoregulated periplasmic glucan (OPG) biosynthesis. Necessary for the succinyl substitution of periplasmic glucans. Could catalyze the transfer of succinyl residues from the cytoplasmic side of the membrane to the nascent glucan backbones on the periplasmic side of the membrane. This chain is Glucans biosynthesis protein C, found in Salmonella heidelberg (strain SL476).